We begin with the raw amino-acid sequence, 492 residues long: 3-octaprenyl-4-hydroxybenzoate carboxy-lyase (492 aa).

Position 175 (Asn175) interacts with Mn(2+). Residues 178–180 (IYR), 192–194 (RWL), and 197–198 (RG) each bind prenylated FMN. Glu241 is a binding site for Mn(2+). Asp290 functions as the Proton donor in the catalytic mechanism.

The protein belongs to the UbiD family. Homohexamer. The cofactor is prenylated FMN. Requires Mn(2+) as cofactor.

Its subcellular location is the cell membrane. The catalysed reaction is a 4-hydroxy-3-(all-trans-polyprenyl)benzoate + H(+) = a 2-(all-trans-polyprenyl)phenol + CO2. It functions in the pathway cofactor biosynthesis; ubiquinone biosynthesis. Functionally, catalyzes the decarboxylation of 3-octaprenyl-4-hydroxy benzoate to 2-octaprenylphenol, an intermediate step in ubiquinone biosynthesis. This Salmonella typhi protein is 3-octaprenyl-4-hydroxybenzoate carboxy-lyase.